Here is a 471-residue protein sequence, read N- to C-terminus: Variant surface glycoprotein ILTAT 1.1BC (471 aa).

The N-terminal stretch at 1–21 is a signal peptide; the sequence is MVKAIASLMLLHIWAIEEIKA. A glycan (N-linked (GlcNAc...) asparagine) is linked at asparagine 130. Polar residues predominate over residues 158–168; that stretch reads TVSKTTECNTE. Disordered stretches follow at residues 158–183 and 204–232; these read TVSKTTECNTESPEDTKEPDQTTLSK and GGACSAASSSDKIHITNETDSKNKGTTAS. Residues 214-226 are compositionally biased toward basic and acidic residues; sequence DKIHITNETDSKN. 2 N-linked (GlcNAc...) asparagine glycosylation sites follow: asparagine 220 and asparagine 260. 2 disulfide bridges follow: cysteine 397–cysteine 410 and cysteine 406–cysteine 421. Residues 432–454 are disordered; that stretch reads AEQAATNQETEGKDGKTTNTTGS. Residue asparagine 450 is glycosylated (N-linked (GlcNAc...) asparagine). Serine 454 carries the GPI-anchor amidated serine lipid modification. A propeptide spans 455-471 (removed in mature form); sequence NSFLINKAPVLLAFLLL.

It is found in the cell membrane. In terms of biological role, VSG forms a coat on the surface of the parasite. The trypanosome evades the immune response of the host by expressing a series of antigenically distinct VSGs from an estimated 1000 VSG genes. The polypeptide is Variant surface glycoprotein ILTAT 1.1BC (Trypanosoma brucei brucei).